The primary structure comprises 477 residues: Aspartyl/glutamyl-tRNA(Asn/Gln) amidotransferase subunit B (477 aa).

Belongs to the GatB/GatE family. GatB subfamily. In terms of assembly, heterotrimer of A, B and C subunits.

The catalysed reaction is L-glutamyl-tRNA(Gln) + L-glutamine + ATP + H2O = L-glutaminyl-tRNA(Gln) + L-glutamate + ADP + phosphate + H(+). It carries out the reaction L-aspartyl-tRNA(Asn) + L-glutamine + ATP + H2O = L-asparaginyl-tRNA(Asn) + L-glutamate + ADP + phosphate + 2 H(+). Allows the formation of correctly charged Asn-tRNA(Asn) or Gln-tRNA(Gln) through the transamidation of misacylated Asp-tRNA(Asn) or Glu-tRNA(Gln) in organisms which lack either or both of asparaginyl-tRNA or glutaminyl-tRNA synthetases. The reaction takes place in the presence of glutamine and ATP through an activated phospho-Asp-tRNA(Asn) or phospho-Glu-tRNA(Gln). This is Aspartyl/glutamyl-tRNA(Asn/Gln) amidotransferase subunit B from Bdellovibrio bacteriovorus (strain ATCC 15356 / DSM 50701 / NCIMB 9529 / HD100).